The primary structure comprises 726 residues: Catalase-peroxidase (726 aa).

The disordered stretch occupies residues 1 to 33; the sequence is MSTSDDIHNTTATGKCPFHQGGHDQSAGAGTTT. Positions 105-226 form a cross-link, tryptophyl-tyrosyl-methioninium (Trp-Tyr) (with M-252); it reads WHGAGTYRSI…LGATEMGLIY (122 aa). His-106 functions as the Proton acceptor in the catalytic mechanism. A cross-link (tryptophyl-tyrosyl-methioninium (Tyr-Met) (with W-105)) is located at residues 226 to 252; sequence YVNPEGPDHSGEPLSAAAAIRATFGNM. Residue His-267 coordinates heme b.

The protein belongs to the peroxidase family. Peroxidase/catalase subfamily. As to quaternary structure, homodimer or homotetramer. The cofactor is heme b. Post-translationally, formation of the three residue Trp-Tyr-Met cross-link is important for the catalase, but not the peroxidase activity of the enzyme.

The catalysed reaction is H2O2 + AH2 = A + 2 H2O. It catalyses the reaction 2 H2O2 = O2 + 2 H2O. Its function is as follows. Bifunctional enzyme with both catalase and broad-spectrum peroxidase activity. This is Catalase-peroxidase from Shigella boydii serotype 4 (strain Sb227).